Here is a 260-residue protein sequence, read N- to C-terminus: Phosphonates import ATP-binding protein PhnC 2 (260 aa).

In terms of domain architecture, ABC transporter spans 4-245 (IQINKATKTY…KNTLRTIYQR (242 aa)). Residue 37–44 (GPSGAGKS) coordinates ATP.

Belongs to the ABC transporter superfamily. Phosphonates importer (TC 3.A.1.9.1) family. In terms of assembly, the complex is composed of two ATP-binding proteins (PhnC), two transmembrane proteins (PhnE) and a solute-binding protein (PhnD).

The protein resides in the cell inner membrane. It catalyses the reaction phosphonate(out) + ATP + H2O = phosphonate(in) + ADP + phosphate + H(+). In terms of biological role, part of the ABC transporter complex PhnCDE involved in phosphonates import. Responsible for energy coupling to the transport system. The chain is Phosphonates import ATP-binding protein PhnC 2 from Trichodesmium erythraeum (strain IMS101).